We begin with the raw amino-acid sequence, 185 residues long: Ribosome-recycling factor (185 aa).

The protein belongs to the RRF family.

The protein resides in the cytoplasm. In terms of biological role, responsible for the release of ribosomes from messenger RNA at the termination of protein biosynthesis. May increase the efficiency of translation by recycling ribosomes from one round of translation to another. The sequence is that of Ribosome-recycling factor from Methylobacillus flagellatus (strain ATCC 51484 / DSM 6875 / VKM B-1610 / KT).